Here is a 187-residue protein sequence, read N- to C-terminus: Elongation factor P (187 aa).

K34 carries the N6-(3,6-diaminohexanoyl)-5-hydroxylysine modification.

This sequence belongs to the elongation factor P family. In terms of processing, may be beta-lysylated on the epsilon-amino group of Lys-34 by the combined action of EpmA and EpmB, and then hydroxylated on the C5 position of the same residue by EpmC (if this protein is present). Lysylation is critical for the stimulatory effect of EF-P on peptide-bond formation. The lysylation moiety may extend toward the peptidyltransferase center and stabilize the terminal 3-CCA end of the tRNA. Hydroxylation of the C5 position on Lys-34 may allow additional potential stabilizing hydrogen-bond interactions with the P-tRNA.

It is found in the cytoplasm. It functions in the pathway protein biosynthesis; polypeptide chain elongation. Involved in peptide bond synthesis. Alleviates ribosome stalling that occurs when 3 or more consecutive Pro residues or the sequence PPG is present in a protein, possibly by augmenting the peptidyl transferase activity of the ribosome. Modification of Lys-34 is required for alleviation. In Vesicomyosocius okutanii subsp. Calyptogena okutanii (strain HA), this protein is Elongation factor P.